The primary structure comprises 239 residues: tRNA (guanine-N(7)-)-methyltransferase (239 aa).

S-adenosyl-L-methionine-binding residues include E68, E93, D120, and D143. Residue D143 is part of the active site. Substrate contacts are provided by residues K147, D180, and 217 to 220 (TKFE).

Belongs to the class I-like SAM-binding methyltransferase superfamily. TrmB family.

The enzyme catalyses guanosine(46) in tRNA + S-adenosyl-L-methionine = N(7)-methylguanosine(46) in tRNA + S-adenosyl-L-homocysteine. It participates in tRNA modification; N(7)-methylguanine-tRNA biosynthesis. Its function is as follows. Catalyzes the formation of N(7)-methylguanine at position 46 (m7G46) in tRNA. The protein is tRNA (guanine-N(7)-)-methyltransferase of Vibrio cholerae serotype O1 (strain ATCC 39541 / Classical Ogawa 395 / O395).